The chain runs to 154 residues: 6,7-dimethyl-8-ribityllumazine synthase (154 aa).

5-amino-6-(D-ribitylamino)uracil contacts are provided by residues Trp23, 57 to 59 (AFE), and 81 to 83 (AVI). (2S)-2-hydroxy-3-oxobutyl phosphate is bound at residue 86–87 (AT). His89 (proton donor) is an active-site residue. Residue Phe114 participates in 5-amino-6-(D-ribitylamino)uracil binding. Position 128 (Arg128) interacts with (2S)-2-hydroxy-3-oxobutyl phosphate.

The protein belongs to the DMRL synthase family.

It catalyses the reaction (2S)-2-hydroxy-3-oxobutyl phosphate + 5-amino-6-(D-ribitylamino)uracil = 6,7-dimethyl-8-(1-D-ribityl)lumazine + phosphate + 2 H2O + H(+). Its pathway is cofactor biosynthesis; riboflavin biosynthesis; riboflavin from 2-hydroxy-3-oxobutyl phosphate and 5-amino-6-(D-ribitylamino)uracil: step 1/2. Catalyzes the formation of 6,7-dimethyl-8-ribityllumazine by condensation of 5-amino-6-(D-ribitylamino)uracil with 3,4-dihydroxy-2-butanone 4-phosphate. This is the penultimate step in the biosynthesis of riboflavin. In Sulfurimonas denitrificans (strain ATCC 33889 / DSM 1251) (Thiomicrospira denitrificans (strain ATCC 33889 / DSM 1251)), this protein is 6,7-dimethyl-8-ribityllumazine synthase.